The sequence spans 162 residues: Protein SLM4 (162 aa).

Residues 127 to 144 (LLLLFIAEGSFPYGLLVI) form a helical membrane-spanning segment.

Component of the GSE complex composed of GTR1, GTR2, SLM4, MEH1 and LTV1. Component of the EGO complex, at least composed of GTR2, SLM4 and MEH1.

The protein localises to the vacuole membrane. Its function is as follows. Component of the GSE complex, a GTPase complex required for intracellular sorting of GAP1 out of the endosome. Component of the EGO complex, a complex involved in the regulation of microautophagy. This Saccharomyces cerevisiae (strain ATCC 204508 / S288c) (Baker's yeast) protein is Protein SLM4 (SLM4).